Reading from the N-terminus, the 153-residue chain is Riboflavin synthase (153 aa).

It belongs to the DMRL synthase family. As to quaternary structure, homooligomer. Mg(2+) is required as a cofactor.

The catalysed reaction is 2 6,7-dimethyl-8-(1-D-ribityl)lumazine + H(+) = 5-amino-6-(D-ribitylamino)uracil + riboflavin. Its pathway is cofactor biosynthesis; riboflavin biosynthesis; riboflavin from 2-hydroxy-3-oxobutyl phosphate and 5-amino-6-(D-ribitylamino)uracil: step 2/2. With respect to regulation, inhibited by EDTA. In Methanothermobacter thermautotrophicus (strain ATCC 29096 / DSM 1053 / JCM 10044 / NBRC 100330 / Delta H) (Methanobacterium thermoautotrophicum), this protein is Riboflavin synthase (ribC).